Consider the following 234-residue polypeptide: Leucyl/phenylalanyl-tRNA--protein transferase (234 aa).

Belongs to the L/F-transferase family.

The protein localises to the cytoplasm. The enzyme catalyses N-terminal L-lysyl-[protein] + L-leucyl-tRNA(Leu) = N-terminal L-leucyl-L-lysyl-[protein] + tRNA(Leu) + H(+). The catalysed reaction is N-terminal L-arginyl-[protein] + L-leucyl-tRNA(Leu) = N-terminal L-leucyl-L-arginyl-[protein] + tRNA(Leu) + H(+). It carries out the reaction L-phenylalanyl-tRNA(Phe) + an N-terminal L-alpha-aminoacyl-[protein] = an N-terminal L-phenylalanyl-L-alpha-aminoacyl-[protein] + tRNA(Phe). Functionally, functions in the N-end rule pathway of protein degradation where it conjugates Leu, Phe and, less efficiently, Met from aminoacyl-tRNAs to the N-termini of proteins containing an N-terminal arginine or lysine. This Shigella flexneri serotype 5b (strain 8401) protein is Leucyl/phenylalanyl-tRNA--protein transferase.